The following is a 374-amino-acid chain: MPLLISPFAELDLIRQPEQQDEPLQAFDAADEYLLNHVAQAGLSLPSRVLVLNDSFGALAASLAPHATVISSTDSFLAAQALEKNLARNGMSYDAVPHIPASEALQGPFDWVLIRVPKTLALLEEQLIRLQGQLAPGARVIAAAMVKHLPRSAGDLLEEYVGPVQASLAVKKARLLFATPQPMEVRTSPYPTRYRLEEPAIELLNHANVFCRDGLDIGTRAFLPHLPKNLGTARVADLGCGNGVLAIASALDNPQAHYTLVDESFMAVKSAAENWRATLGDRDVRVRAGDGLEMQEPDSLDVVLCNPPFHQQQVVGDFLAWRMFLQARAALVTGGALYIVGNRHLGYHTKLSRLFRGVEQVAATPKFVILKARK.

It belongs to the methyltransferase superfamily. RlmG family.

The protein resides in the cytoplasm. It catalyses the reaction guanosine(1835) in 23S rRNA + S-adenosyl-L-methionine = N(2)-methylguanosine(1835) in 23S rRNA + S-adenosyl-L-homocysteine + H(+). In terms of biological role, specifically methylates the guanine in position 1835 (m2G1835) of 23S rRNA. The chain is Ribosomal RNA large subunit methyltransferase G from Pseudomonas syringae pv. syringae (strain B728a).